Reading from the N-terminus, the 479-residue chain is Ribosomal RNA small subunit methyltransferase F (479 aa).

S-adenosyl-L-methionine contacts are provided by residues 125-131, Glu-149, Asp-176, and Asp-194; that span reads AAAPGSK. Cys-247 serves as the catalytic Nucleophile.

It belongs to the class I-like SAM-binding methyltransferase superfamily. RsmB/NOP family.

It localises to the cytoplasm. The catalysed reaction is cytidine(1407) in 16S rRNA + S-adenosyl-L-methionine = 5-methylcytidine(1407) in 16S rRNA + S-adenosyl-L-homocysteine + H(+). Functionally, specifically methylates the cytosine at position 1407 (m5C1407) of 16S rRNA. The polypeptide is Ribosomal RNA small subunit methyltransferase F (Escherichia coli O139:H28 (strain E24377A / ETEC)).